The following is a 670-amino-acid chain: uncharacterized protein (670 aa).

Residues 53–83 are disordered; the sequence is PTAKPSDFPGDAVTGTQPVPREPSSLPRTTP. 27 tandem repeats follow at residues 143 to 158, 171 to 186, 200 to 214, 215 to 233, 234 to 252, 253 to 268, 279 to 293, 294 to 309, 320 to 334, 335 to 349, 362 to 376, 377 to 391, 392 to 406, 407 to 421, 422 to 436, 437 to 452, 464 to 477, 478 to 493, 504 to 517, 518 to 531, 532 to 545, 546 to 559, 560 to 573, 574 to 587, 588 to 601, 602 to 615, and 616 to 629. A disordered region spans residues 187 to 225; it reads PAGANDTAVTTTSATPAGANDTAVTTTPATPAGANDTAN. Positions 205-225 are enriched in low complexity; it reads ANDTAVTTTPATPAGANDTAN. Residues 339–395 form a disordered region; that stretch reads GANDTANVTKPAGSTDTVVTTTPAMPTGATDTVVTTTPAMPTGATDTVVTTTPAMPT. Positions 342 to 362 are enriched in polar residues; the sequence is DTANVTKPAGSTDTVVTTTPA. The span at 363 to 395 shows a compositional bias: low complexity; the sequence is MPTGATDTVVTTTPAMPTGATDTVVTTTPAMPT. 2 stretches are compositionally biased toward low complexity: residues 471 to 482 and 490 to 503; these read GTVTTTTAKPTG and TKPT…TTTT. Residues 471–503 are disordered; it reads GTVTTTTAKPTGANDTANVTKPTGATGTVTTTT. A compositionally biased stretch (low complexity) spans 525–634; sequence GTVTTTTAKP…VTTTTAKPAG (110 aa). The interval 525-670 is disordered; sequence GTVTTTTAKP…GHKPKSGARR (146 aa). Positions 638–654 are enriched in basic residues; that stretch reads GHGHGHGHGHGHGHGHG.

This is an uncharacterized protein from Ictalurid herpesvirus 1 (strain Auburn) (IcHV-1).